The primary structure comprises 499 residues: Lysine--tRNA ligase (499 aa).

Mg(2+)-binding residues include glutamate 409 and glutamate 416.

Belongs to the class-II aminoacyl-tRNA synthetase family. As to quaternary structure, homodimer. Mg(2+) is required as a cofactor.

The protein resides in the cytoplasm. The catalysed reaction is tRNA(Lys) + L-lysine + ATP = L-lysyl-tRNA(Lys) + AMP + diphosphate. This chain is Lysine--tRNA ligase, found in Pseudomonas fluorescens (strain Pf0-1).